The following is a 983-amino-acid chain: Protein CLASP-3 (983 aa).

Disordered stretches follow at residues 356–393 (YPNR…TQKA) and 666–690 (SNNI…QKES). Over residues 359-372 (RPGSRTRTSSITST) the composition is skewed to low complexity. An HEAT repeat occupies 918 to 956 (ITPTIIKAYQSTSSTVRKTVVYCLVAMVNRVGEQRMTPH).

Belongs to the CLASP family.

It is found in the cytoplasm. Its subcellular location is the cytoskeleton. Microtubule plus-end tracking protein that promotes the stabilization of dynamic microtubules. This is Protein CLASP-3 (cls-3) from Caenorhabditis elegans.